The sequence spans 88 residues: Large ribosomal subunit protein bL27 (88 aa).

Residues 1 to 26 form a disordered region; sequence MAHKKGTGSTRNGRDSNSKRLGVKAY.

Belongs to the bacterial ribosomal protein bL27 family.

The sequence is that of Large ribosomal subunit protein bL27 from Prochlorococcus marinus (strain MIT 9211).